The following is a 242-amino-acid chain: MDVARDMEKNTTAMGQLMSSSATTAATATGPASPKRPAGRTKFQETRHPVFRGVRRRGRAGRWVCEVRVPGSRGDRLWVGTFDTAEEAARAHDAAMLAMCGASASLNFTDSAWLLHVPRAPVASGHDQLPDVQRAASEAVAEFQRRGSTAATATATSGDAASTAPPSSSPVLSPNDDNASSASTPAVAAALDHGDMFGGMRADLYYASLAQGLLIEPPPPPTTTEGFCDDEGCGGAEMELWS.

The segment covering 20–29 (SSATTAATAT) has biased composition (low complexity). The disordered stretch occupies residues 20-44 (SSATTAATATGPASPKRPAGRTKFQ). Positions 50–109 (VFRGVRRRGRAGRWVCEVRVPGSRGDRLWVGTFDTAEEAARAHDAAMLAMCGASASLNFT) form a DNA-binding region, AP2/ERF. Positions 143-184 (FQRRGSTAATATATSGDAASTAPPSSSPVLSPNDDNASSAST) are disordered. Over residues 148-184 (STAATATATSGDAASTAPPSSSPVLSPNDDNASSAST) the composition is skewed to low complexity.

This sequence belongs to the AP2/ERF transcription factor family. ERF subfamily.

It is found in the nucleus. Functionally, transcriptional activator that binds specifically to the DNA sequence 5'-[AG]CCGAC-3'. Binding to the C-repeat/DRE element mediates high salinity- and dehydration-inducible transcription. This Oryza sativa subsp. indica (Rice) protein is Dehydration-responsive element-binding protein 1J (DREB1J).